Consider the following 245-residue polypeptide: Chymotrypsin B (245 aa).

5 disulfides stabilise this stretch: Cys-1/Cys-121, Cys-42/Cys-58, Cys-135/Cys-201, Cys-167/Cys-182, and Cys-191/Cys-220. The propeptide occupies 14–15; it reads AR. Residues 16–243 form the Peptidase S1 domain; sequence IVNGEEAVPH…LRGWVDQILA (228 aa). Active-site charge relay system residues include His-57 and Asp-101. Ser-195 acts as the Charge relay system in catalysis.

This sequence belongs to the peptidase S1 family.

Its subcellular location is the secreted. The protein localises to the extracellular space. The catalysed reaction is Preferential cleavage: Tyr-|-Xaa, Trp-|-Xaa, Phe-|-Xaa, Leu-|-Xaa.. In Gadus morhua (Atlantic cod), this protein is Chymotrypsin B.